A 202-amino-acid polypeptide reads, in one-letter code: 3-isopropylmalate dehydratase small subunit (202 aa).

This sequence belongs to the LeuD family. LeuD type 1 subfamily. As to quaternary structure, heterodimer of LeuC and LeuD.

The enzyme catalyses (2R,3S)-3-isopropylmalate = (2S)-2-isopropylmalate. It functions in the pathway amino-acid biosynthesis; L-leucine biosynthesis; L-leucine from 3-methyl-2-oxobutanoate: step 2/4. Functionally, catalyzes the isomerization between 2-isopropylmalate and 3-isopropylmalate, via the formation of 2-isopropylmaleate. In Rhizobium rhizogenes (strain K84 / ATCC BAA-868) (Agrobacterium radiobacter), this protein is 3-isopropylmalate dehydratase small subunit.